A 170-amino-acid chain; its full sequence is S-ribosylhomocysteine lyase (170 aa).

The Fe cation site is built by H54, H58, and C128.

It belongs to the LuxS family. As to quaternary structure, homodimer. Requires Fe cation as cofactor.

The enzyme catalyses S-(5-deoxy-D-ribos-5-yl)-L-homocysteine = (S)-4,5-dihydroxypentane-2,3-dione + L-homocysteine. In terms of biological role, involved in the synthesis of autoinducer 2 (AI-2) which is secreted by bacteria and is used to communicate both the cell density and the metabolic potential of the environment. The regulation of gene expression in response to changes in cell density is called quorum sensing. Catalyzes the transformation of S-ribosylhomocysteine (RHC) to homocysteine (HC) and 4,5-dihydroxy-2,3-pentadione (DPD). This is S-ribosylhomocysteine lyase from Marinomonas sp. (strain MWYL1).